The primary structure comprises 344 residues: Axoneme-associated protein mst101(1) (344 aa).

Tandem repeats lie at residues 74–89, 90–105, 106–121, 122–137, 138–153, 154–169, 170–185, 186–201, 202–217, 218–233, 234–249, and 250–265. The segment at 74-344 is 17 X 16 AA approximate tandem repeats of K-K-K-C-X-E-X-A-[KQ]-K-X-X-E-X-A-X; that stretch reads KKKCAEAAKK…AAQKKCEPKK (271 aa). The interval 206–244 is disordered; the sequence is KEAAEKKKCEERAKKEKEAAEKKKCEERAKKEKEAAEKK. A 13; approximate repeat occupies 266 to 281; sequence AQKKKCAELAKKAKEA. One copy of the 14; approximate repeat lies at 282 to 297; that stretch reads AEKKKCAKKAGEKGSK. Basic and acidic residues predominate over residues 285-315; it reads KKCAKKAGEKGSKQSGSDKGKKNGKKNDMKN. The interval 285–318 is disordered; sequence KKCAKKAGEKGSKQSGSDKGKKNGKKNDMKNKCA. The stretch at 298–313 is one 15; approximate repeat; the sequence is QSGSDKGKKNGKKNDM. Copy 16 of the repeat occupies 314 to 329; it reads KNKCAMLAKKAKEEAL. A 17; truncated repeat occupies 330–344; that stretch reads KKKCAAAQKKCEPKK.

In terms of tissue distribution, testis. Located in spermatocytes and spermatid bundles.

The protein localises to the cytoplasm. Possible structural role in the sperm tail. It is associated with axonemal structures. The polypeptide is Axoneme-associated protein mst101(1) (mst101(1)) (Drosophila hydei (Fruit fly)).